Consider the following 420-residue polypeptide: 3-oxo-tetronate kinase (420 aa).

ATP-binding positions include Ser-258, 360 to 363 (GGET), and Gly-403.

This sequence belongs to the four-carbon acid sugar kinase family.

It catalyses the reaction 3-dehydro-L-erythronate + ATP = 3-dehydro-4-O-phospho-L-erythronate + ADP + H(+). It carries out the reaction 3-dehydro-D-erythronate + ATP = 3-dehydro-4-O-phospho-D-erythronate + ADP + H(+). Catalyzes the ATP-dependent phosphorylation of 3-oxo-tetronate to 3-oxo-tetronate 4-phosphate. This Salmonella typhimurium (strain LT2 / SGSC1412 / ATCC 700720) protein is 3-oxo-tetronate kinase.